A 161-amino-acid chain; its full sequence is Zinc finger protein KNUCKLES (161 aa).

Residues 1-33 (MAEPPPSYLHFVGPAKTRSSSKRHSFSSSAHPA) form a disordered region. The C2H2-type zinc finger occupies 38-60 (FPCQYCPRKFYTSQALGGHQNAH). The disordered stretch occupies residues 142 to 161 (GGNGVMEEDEPLDLDLSLRL). An EAR-like (transcriptional repression) motif is present at residues 155–159 (LDLSL).

In terms of tissue distribution, first expressed in developing carpel primordia, and later in stamens and ovules of flower buds.

The protein resides in the nucleus. Its function is as follows. May function as a transcriptional repressor of cellular proliferation that regulates floral determinacy and relative size of basal pattern elements along the proximo-distal axis of the developing gynoecium. This chain is Zinc finger protein KNUCKLES (KNU), found in Arabidopsis thaliana (Mouse-ear cress).